Here is a 131-residue protein sequence, read N- to C-terminus: Holo-[acyl-carrier-protein] synthase (131 aa).

Mg(2+) contacts are provided by D8 and E58.

This sequence belongs to the P-Pant transferase superfamily. AcpS family. Mg(2+) serves as cofactor.

It is found in the cytoplasm. The enzyme catalyses apo-[ACP] + CoA = holo-[ACP] + adenosine 3',5'-bisphosphate + H(+). Its function is as follows. Transfers the 4'-phosphopantetheine moiety from coenzyme A to a Ser of acyl-carrier-protein. This is Holo-[acyl-carrier-protein] synthase from Oenococcus oeni (strain ATCC BAA-331 / PSU-1).